Consider the following 367-residue polypeptide: DNA replication and repair protein RecF (367 aa).

30 to 37 (GENAQGKT) is an ATP binding site.

The protein belongs to the RecF family.

The protein resides in the cytoplasm. Its function is as follows. The RecF protein is involved in DNA metabolism; it is required for DNA replication and normal SOS inducibility. RecF binds preferentially to single-stranded, linear DNA. It also seems to bind ATP. In Chlamydia caviae (strain ATCC VR-813 / DSM 19441 / 03DC25 / GPIC) (Chlamydophila caviae), this protein is DNA replication and repair protein RecF.